The sequence spans 278 residues: DNA repair protein RecO (278 aa).

Polar residues predominate over residues M1–D12. A disordered region spans residues M1–D42.

This sequence belongs to the RecO family.

In terms of biological role, involved in DNA repair and RecF pathway recombination. This Burkholderia lata (strain ATCC 17760 / DSM 23089 / LMG 22485 / NCIMB 9086 / R18194 / 383) protein is DNA repair protein RecO.